A 96-amino-acid polypeptide reads, in one-letter code: MSAVSTCADGLVLRLYIQPKASRDSIVGLHGDELKVAITAPPVDGQANAHLTKYLAKQFRVAKSQVIIEKGELGRHKQVKILNPQNIPTEVAALTE.

The protein belongs to the UPF0235 family.

This chain is UPF0235 protein Ent638_3359, found in Enterobacter sp. (strain 638).